The chain runs to 133 residues: NADPH-dependent 7-cyano-7-deazaguanine reductase (133 aa).

Cys48 functions as the Thioimide intermediate in the catalytic mechanism. Asp55 acts as the Proton donor in catalysis. Substrate contacts are provided by residues 70-72 (VEL) and 89-90 (QE).

The protein belongs to the GTP cyclohydrolase I family. QueF type 1 subfamily.

It is found in the cytoplasm. It catalyses the reaction 7-aminomethyl-7-carbaguanine + 2 NADP(+) = 7-cyano-7-deazaguanine + 2 NADPH + 3 H(+). The protein operates within tRNA modification; tRNA-queuosine biosynthesis. Functionally, catalyzes the NADPH-dependent reduction of 7-cyano-7-deazaguanine (preQ0) to 7-aminomethyl-7-deazaguanine (preQ1). The protein is NADPH-dependent 7-cyano-7-deazaguanine reductase of Thermoanaerobacter pseudethanolicus (strain ATCC 33223 / 39E) (Clostridium thermohydrosulfuricum).